Here is a 1156-residue protein sequence, read N- to C-terminus: GPI inositol-deacylase (1156 aa).

Residues 1 to 95 (MHRRSSGSPV…AMATASTETK (95 aa)) are disordered. Composition is skewed to polar residues over residues 20–37 (VSRS…NNAF) and 61–72 (GASTPRSRNSGL). Residues 75-95 (TPSSSSTSSTTAMATASTETK) are compositionally biased toward low complexity. The helical transmembrane segment at 131 to 151 (TCSILTALTTLVASVFLFFIV) threads the bilayer. Serine 318 is an active-site residue. Helical transmembrane passes span 797 to 817 (LVMR…ALVL) and 845 to 865 (FPIL…SAQI). An N-linked (GlcNAc...) asparagine glycan is attached at asparagine 877. A run of 2 helical transmembrane segments spans residues 897–917 (AFFW…CVIL) and 966–986 (ILLV…VACI). N-linked (GlcNAc...) asparagine glycosylation occurs at asparagine 1009. Helical transmembrane passes span 1016–1036 (SIFI…LVWA), 1053–1073 (VLSI…AMIP), 1081–1101 (HVTS…GVSY), and 1102–1122 (AYLL…IYFF).

It belongs to the GPI inositol-deacylase family.

The protein resides in the endoplasmic reticulum membrane. Its function is as follows. Involved in inositol deacylation of GPI-anchored proteins which plays important roles in the quality control and ER-associated degradation of GPI-anchored proteins. The chain is GPI inositol-deacylase (bst1) from Aspergillus fumigatus (strain ATCC MYA-4609 / CBS 101355 / FGSC A1100 / Af293) (Neosartorya fumigata).